The sequence spans 228 residues: NADH-quinone oxidoreductase subunit C (228 aa).

The protein belongs to the complex I 30 kDa subunit family. As to quaternary structure, NDH-1 is composed of 14 different subunits. Subunits NuoB, C, D, E, F, and G constitute the peripheral sector of the complex.

The protein localises to the cell membrane. The catalysed reaction is a quinone + NADH + 5 H(+)(in) = a quinol + NAD(+) + 4 H(+)(out). Its function is as follows. NDH-1 shuttles electrons from NADH, via FMN and iron-sulfur (Fe-S) centers, to quinones in the respiratory chain. The immediate electron acceptor for the enzyme in this species is believed to be a menaquinone. Couples the redox reaction to proton translocation (for every two electrons transferred, four hydrogen ions are translocated across the cytoplasmic membrane), and thus conserves the redox energy in a proton gradient. The chain is NADH-quinone oxidoreductase subunit C from Mycobacteroides abscessus (strain ATCC 19977 / DSM 44196 / CCUG 20993 / CIP 104536 / JCM 13569 / NCTC 13031 / TMC 1543 / L948) (Mycobacterium abscessus).